The primary structure comprises 414 residues: Serine hydroxymethyltransferase (414 aa).

(6S)-5,6,7,8-tetrahydrofolate is bound by residues Leu-121 and 125–127; that span reads GHL. An N6-(pyridoxal phosphate)lysine modification is found at Lys-229.

The protein belongs to the SHMT family. Homodimer. Pyridoxal 5'-phosphate serves as cofactor.

Its subcellular location is the cytoplasm. It catalyses the reaction (6R)-5,10-methylene-5,6,7,8-tetrahydrofolate + glycine + H2O = (6S)-5,6,7,8-tetrahydrofolate + L-serine. It functions in the pathway one-carbon metabolism; tetrahydrofolate interconversion. The protein operates within amino-acid biosynthesis; glycine biosynthesis; glycine from L-serine: step 1/1. Its function is as follows. Catalyzes the reversible interconversion of serine and glycine with tetrahydrofolate (THF) serving as the one-carbon carrier. This reaction serves as the major source of one-carbon groups required for the biosynthesis of purines, thymidylate, methionine, and other important biomolecules. Also exhibits THF-independent aldolase activity toward beta-hydroxyamino acids, producing glycine and aldehydes, via a retro-aldol mechanism. This is Serine hydroxymethyltransferase from Herminiimonas arsenicoxydans.